The sequence spans 494 residues: Ell-associated factor Eaf (494 aa).

A compositionally biased stretch (polar residues) spans 119 to 138 (KTRSEVTNKPSLMSATNAPM). Disordered stretches follow at residues 119–212 (KTRS…PAWH) and 243–494 (QANI…DDDD). Positions 139 to 156 (SNGAPVPSSAAAGTGSAG) are enriched in low complexity. Positions 159–178 (ENSTMRISSKTKVSTGSRRN) are enriched in polar residues. Ser-188 carries the post-translational modification Phosphoserine. 2 stretches are compositionally biased toward polar residues: residues 243–256 (QANISGSSTGSSAG) and 280–306 (QQLTQRSSPPMQQQQHQNYGRGSNNYA). Positions 307 to 319 (QQQQQQQQQQLQQ) are enriched in low complexity. Residues 320 to 332 (RASFSHSNHSNSM) are compositionally biased toward polar residues. Residues 344 to 373 (QTAQSMAQAAAALEQQIGGELSASSSSSES) show a composition bias toward low complexity. Residues 374–389 (DSSDSDSGSDSDDSTE) are compositionally biased toward acidic residues. The span at 414–424 (HQQQQHMHQLP) shows a compositional bias: low complexity. Basic residues predominate over residues 437–454 (SHHHHQQQQQSHHHHHHQ). Composition is skewed to low complexity over residues 455 to 464 (QQQQQQHQQS) and 475 to 488 (NDLLQNDLQLSSNS).

It belongs to the EAF family.

It localises to the nucleus. Promotes transcriptional elongation by Su(Tpl)/ELL. Essential for development. The polypeptide is Ell-associated factor Eaf (Drosophila virilis (Fruit fly)).